Here is a 359-residue protein sequence, read N- to C-terminus: DNA polymerase IV (359 aa).

One can recognise a UmuC domain in the interval 7-188 (IIHIDMDAFY…LPIGKFFGVG (182 aa)). Mg(2+) contacts are provided by aspartate 11 and aspartate 106. Residue glutamate 107 is part of the active site.

It belongs to the DNA polymerase type-Y family. As to quaternary structure, monomer. Mg(2+) serves as cofactor.

The protein resides in the cytoplasm. The catalysed reaction is DNA(n) + a 2'-deoxyribonucleoside 5'-triphosphate = DNA(n+1) + diphosphate. Its function is as follows. Poorly processive, error-prone DNA polymerase involved in untargeted mutagenesis. Copies undamaged DNA at stalled replication forks, which arise in vivo from mismatched or misaligned primer ends. These misaligned primers can be extended by PolIV. Exhibits no 3'-5' exonuclease (proofreading) activity. May be involved in translesional synthesis, in conjunction with the beta clamp from PolIII. In Clostridium perfringens (strain 13 / Type A), this protein is DNA polymerase IV.